The chain runs to 239 residues: Hexuronic acid methyltransferase AglP (239 aa).

The protein belongs to the FkbM methyltransferase family.

Its subcellular location is the cytoplasm. It participates in cell surface structure biogenesis; S-layer biogenesis. Functionally, involved in the assembly of a N-linked pentasaccharide that decorates the S-layer glycoprotein and flagellins. S-adenosyl-L-methionine-dependent methyltransferase that modifies the hexuronic acid found at position 4 of the pentasaccharide. This is Hexuronic acid methyltransferase AglP (aglP) from Haloferax volcanii (strain ATCC 29605 / DSM 3757 / JCM 8879 / NBRC 14742 / NCIMB 2012 / VKM B-1768 / DS2) (Halobacterium volcanii).